A 321-amino-acid chain; its full sequence is MVDARGSTPCLIGDSIRNVNDGNSLDFQYTNQFNEESEASRLLTPQTSSNHALSKMQKDDDIRDRSYTSVAELNREGALLTDEVDLENVDASKVRSNRDDLEAEEKRKKLLLLKKKQRNKSINSESFSSPSLRASKSNSLITSTDPVEDHISKYSSSGTPENITGEADDEDEDIIRNSYGQMIKNNSNRPHLAKGESYQSAEQEIDHTAPEKSEKRQERSGRSFDRQKSSAEFLRSLSRSISRGPTKNKTVSPSKGEDSRMYSTSNYSISLVDLENGPKIIPETLEEEQEDAEKEGVLMEDEGNEEYTKDLEEAANKAQPQ.

Val-2 carries the N-acetylvaline modification. A disordered region spans residues 37–63; it reads SEASRLLTPQTSSNHALSKMQKDDDIR. The span at 43–52 shows a compositional bias: polar residues; that stretch reads LTPQTSSNHA. A Phosphothreonine modification is found at Thr-44. Residues Ser-49, Ser-69, Ser-121, Ser-126, Ser-129, Ser-137, and Ser-139 each carry the phosphoserine modification. Disordered regions lie at residues 115-270 and 283-321; these read KKQR…YSIS and ETLEEEQEDAEKEGVLMEDEGNEEYTKDLEEAANKAQPQ. 3 stretches are compositionally biased toward polar residues: residues 120 to 145, 153 to 162, and 178 to 189; these read KSINSESFSSPSLRASKSNSLITSTD, KYSSSGTPEN, and SYGQMIKNNSNR. A Phosphothreonine modification is found at Thr-159. Over residues 204–229 the composition is skewed to basic and acidic residues; it reads EIDHTAPEKSEKRQERSGRSFDRQKS. Polar residues predominate over residues 237–253; the sequence is LSRSISRGPTKNKTVSP. Residues Ser-238, Ser-240, Ser-242, and Ser-270 each carry the phosphoserine modification. Over residues 284–305 the composition is skewed to acidic residues; the sequence is TLEEEQEDAEKEGVLMEDEGNE. A compositionally biased stretch (basic and acidic residues) spans 306-315; it reads EYTKDLEEAA.

Its subcellular location is the cytoplasm. This is an uncharacterized protein from Saccharomyces cerevisiae (strain ATCC 204508 / S288c) (Baker's yeast).